The primary structure comprises 141 residues: Endoribonuclease YbeY (141 aa).

The Zn(2+) site is built by histidine 100, histidine 104, and histidine 110.

This sequence belongs to the endoribonuclease YbeY family. It depends on Zn(2+) as a cofactor.

It localises to the cytoplasm. Its function is as follows. Single strand-specific metallo-endoribonuclease involved in late-stage 70S ribosome quality control and in maturation of the 3' terminus of the 16S rRNA. The protein is Endoribonuclease YbeY of Helicobacter pylori (strain J99 / ATCC 700824) (Campylobacter pylori J99).